Here is a 1196-residue protein sequence, read N- to C-terminus: MEQASTMAEPRGPVDHGVQIRFITEPVGNAEMDTLRRGGRRPAKDARANTYGVAVRVQGIAGQPFVVLNSGEQGSDSFGVQIKGTNNRGPPGALSSDSELPESTYSHAKEFPARSQGSMSDEELGAHWNGRLLRSQSQASLKGPAPVSPSTRSTSLLQLAPEVASPGSTIDTAPLSSVDSLINKFDSRQGGQARGRTGRRMRTLPPEQRKRSQSLDNRLPRDTLDEREHQFPTHWTPSTKRDSHMGNSKQSSQNQGPLGGFSCSRQTQDWVLQSFEEPRGRAWDPGMLQFKSTPDLLRDQQETAPPGSVDHVKATIYSILREGSSETETSVRRKVNLVLEQMQPLVMTSGSAKGLTGQSELSQKVEELQQKLDEEVKKRPKLESSRLGLERQLQEKAEECSQLQELLERRKGEAQQSTKELQNMKLLVDQSERVRCGLEAQVKELQDKLKQAQEPEPAKEALMKDLLEARELLEEVLEGKQRMEEHLRLRERELTALKGALKEEVASRDQEVEHVRQQCQRDAEQLRRSIQDATQDHAALEVERQKMSTLVRELQKELEETSEETGHWQSMFQKNKDELRATKQELLQLRMEKEEIEEELGEKIEVLQRELGQARAGAADTRQMEELKKELCQTQKELKELKEEQQNQEVAGRHRERELEKQLKVEADRGQGLEQQNLQLQKTLQQLRQDCEEASKAQVAAEAEVAVLGQRRAAVEVTLRETQEENDEFRRRILGLEQQLKEARGLAEGGEVAEARLRDKVQRLEAEKQRLEEALNAAQEEEGSLAAAKRALEARLEEAQRGLARLGQEQLALNRALEEEGKQREALRRSKAELEEQKRLLDKTVCQLNKELEQIGNDSKQALQQLQAQLEDYKEKARREVADAQRQAKEWATEAEKNSGGLSRLQDETQRLRQALQASQADRDTARLDKELLAQRLQGLEQEAENKKRSQDDRARQLKGLEEKVSRLEAELDEERSTVELLTERVTRGRDQVDQLRSELMQERSARQDLECDKISLERQNKDLKSRLASSEGFQKPSASLSQLESQNQELQERLQAEEREKTVLQSTNRKLERRVKELSIQIDDERQHVNDQKDQLSLRVKALKRQVDEAEEEIERLDGLRKKAQRELEEQHEVNEQLQARIKTLEKDSWRKASRSAAESAQREGLSSDEEFDSVYDPSSIASLLTESNLQTSSC.

The interval 7–354 (MAEPRGPVDH…LVMTSGSAKG (348 aa)) is head. Positions 48 to 62 (ANTYGVAVRVQGIAG) match the ZIM motif. Residues 54–67 (AVRVQGIAGQPFVV) form an interaction with TJP1/ZO1 region. Positions 82–105 (IKGTNNRGPPGALSSDSELPESTY) are disordered. A phosphoserine mark is found at Ser-95, Ser-96, Ser-98, Ser-135, Ser-137, Ser-140, Ser-155, Ser-165, and Ser-214. Positions 95–105 (SSDSELPESTY) are enriched in polar residues. Positions 183–263 (NKFDSRQGGQ…NQGPLGGFSC (81 aa)) are disordered. Positions 218 to 231 (RLPRDTLDEREHQF) are enriched in basic and acidic residues. The span at 245-256 (MGNSKQSSQNQG) shows a compositional bias: polar residues. Residue Ser-274 is modified to Phosphoserine. The stretch at 355–1150 (LTGQSELSQK…ARIKTLEKDS (796 aa)) forms a coiled coil. Lys-576 bears the N6-acetyllysine mark. The segment covering 884 to 897 (AQRQAKEWATEAEK) has biased composition (basic and acidic residues). Disordered regions lie at residues 884–906 (AQRQAKEWATEAEKNSGGLSRLQ), 1023–1061 (DLKSRLASSEGFQKPSASLSQLESQNQELQERLQAEERE), and 1149–1174 (DSWRKASRSAAESAQREGLSSDEEFD). The span at 1038 to 1050 (SASLSQLESQNQE) shows a compositional bias: low complexity. The span at 1051–1061 (LQERLQAEERE) shows a compositional bias: basic and acidic residues. The tract at residues 1155–1196 (SRSAAESAQREGLSSDEEFDSVYDPSSIASLLTESNLQTSSC) is tail. Phosphoserine is present on residues Ser-1168, Ser-1169, and Ser-1175.

Belongs to the cingulin family. Homodimer. Interacts with TJP1/ZO1 and SPEF1.

The protein localises to the cell junction. The protein resides in the tight junction. Functionally, probably plays a role in the formation and regulation of the tight junction (TJ) paracellular permeability barrier. The polypeptide is Cingulin (Canis lupus familiaris (Dog)).